We begin with the raw amino-acid sequence, 119 residues long: Large ribosomal subunit protein uL18 (119 aa).

Belongs to the universal ribosomal protein uL18 family. As to quaternary structure, part of the 50S ribosomal subunit; part of the 5S rRNA/L5/L18/L25 subcomplex. Contacts the 5S and 23S rRNAs.

This is one of the proteins that bind and probably mediate the attachment of the 5S RNA into the large ribosomal subunit, where it forms part of the central protuberance. The protein is Large ribosomal subunit protein uL18 of Micrococcus luteus (Micrococcus lysodeikticus).